A 72-amino-acid polypeptide reads, in one-letter code: Large ribosomal subunit protein bL28 (72 aa).

The protein belongs to the bacterial ribosomal protein bL28 family.

In Chlorobium phaeobacteroides (strain DSM 266 / SMG 266 / 2430), this protein is Large ribosomal subunit protein bL28.